The chain runs to 154 residues: Proteasome subunit beta type-4 (154 aa).

Methionine 1 carries the N-acetylmethionine modification. The propeptide occupies methionine 1 to arginine 45. Tyrosine 102 is subject to Phosphotyrosine.

Belongs to the peptidase T1B family. In terms of assembly, the 26S proteasome consists of a 20S proteasome core and two 19S regulatory subunits. The 20S proteasome core is a barrel-shaped complex made of 28 subunits that are arranged in four stacked rings. The two outer rings are each formed by seven alpha subunits, and the two inner rings are formed by seven beta subunits. The proteolytic activity is exerted by three beta-subunits PSMB5, PSMB6 and PSMB7. Forms a ternary complex with SMAD1 and OAZ1 before PSMB4 is incorporated into the 20S proteasome. Interacts with PRPF19.

It localises to the cytoplasm. Its subcellular location is the nucleus. In terms of biological role, non-catalytic component of the 20S core proteasome complex involved in the proteolytic degradation of most intracellular proteins. This complex plays numerous essential roles within the cell by associating with different regulatory particles. Associated with two 19S regulatory particles, forms the 26S proteasome and thus participates in the ATP-dependent degradation of ubiquitinated proteins. The 26S proteasome plays a key role in the maintenance of protein homeostasis by removing misfolded or damaged proteins that could impair cellular functions, and by removing proteins whose functions are no longer required. Associated with the PA200 or PA28, the 20S proteasome mediates ubiquitin-independent protein degradation. This type of proteolysis is required in several pathways including spermatogenesis (20S-PA200 complex) or generation of a subset of MHC class I-presented antigenic peptides (20S-PA28 complex). SMAD1/OAZ1/PSMB4 complex mediates the degradation of the CREBBP/EP300 repressor SNIP1. The sequence is that of Proteasome subunit beta type-4 (PSMB4) from Sus scrofa (Pig).